The chain runs to 353 residues: UDP-N-acetylglucosamine--N-acetylmuramyl-(pentapeptide) pyrophosphoryl-undecaprenol N-acetylglucosamine transferase (353 aa).

UDP-N-acetyl-alpha-D-glucosamine-binding positions include 15–17 (TGG), Asn-125, Arg-165, Ser-186, and Gln-286.

This sequence belongs to the glycosyltransferase 28 family. MurG subfamily.

It localises to the cell inner membrane. It carries out the reaction di-trans,octa-cis-undecaprenyl diphospho-N-acetyl-alpha-D-muramoyl-L-alanyl-D-glutamyl-meso-2,6-diaminopimeloyl-D-alanyl-D-alanine + UDP-N-acetyl-alpha-D-glucosamine = di-trans,octa-cis-undecaprenyl diphospho-[N-acetyl-alpha-D-glucosaminyl-(1-&gt;4)]-N-acetyl-alpha-D-muramoyl-L-alanyl-D-glutamyl-meso-2,6-diaminopimeloyl-D-alanyl-D-alanine + UDP + H(+). The protein operates within cell wall biogenesis; peptidoglycan biosynthesis. Functionally, cell wall formation. Catalyzes the transfer of a GlcNAc subunit on undecaprenyl-pyrophosphoryl-MurNAc-pentapeptide (lipid intermediate I) to form undecaprenyl-pyrophosphoryl-MurNAc-(pentapeptide)GlcNAc (lipid intermediate II). In Chlamydia muridarum (strain MoPn / Nigg), this protein is UDP-N-acetylglucosamine--N-acetylmuramyl-(pentapeptide) pyrophosphoryl-undecaprenol N-acetylglucosamine transferase.